The sequence spans 338 residues: Nicotinate-nucleotide--dimethylbenzimidazole phosphoribosyltransferase (338 aa).

Glu-306 (proton acceptor) is an active-site residue.

Belongs to the CobT family.

It carries out the reaction 5,6-dimethylbenzimidazole + nicotinate beta-D-ribonucleotide = alpha-ribazole 5'-phosphate + nicotinate + H(+). It participates in nucleoside biosynthesis; alpha-ribazole biosynthesis; alpha-ribazole from 5,6-dimethylbenzimidazole: step 1/2. Functionally, catalyzes the synthesis of alpha-ribazole-5'-phosphate from nicotinate mononucleotide (NAMN) and 5,6-dimethylbenzimidazole (DMB). In Cereibacter sphaeroides (strain ATCC 17025 / ATH 2.4.3) (Rhodobacter sphaeroides), this protein is Nicotinate-nucleotide--dimethylbenzimidazole phosphoribosyltransferase.